The sequence spans 581 residues: MRMSLLFYRTSKNANKEASVLSYELLQKAGYLFKTSKGIYSYTPLFQRVILKMTEIIREELNAIGGQEVCLPLLQPAELWEKTGRWKAFLSEKLLYVLKDRENKAMCLAPTHEEVVSEFVAQWLTGREQLPIHLYQIGTKFRDEIRPRFGLMRAKEFLMEDSYTFSDSPEQMEEQYAKLRLAYQRIFDRLNLKYVIVAADGGKIGKGKSEEFHVLCSLGEDTICVSGSYGANVEAAQAIPPSYVYDSNLLPVEEVATPNIRTIEDLEVFFNTPKHKILKTLVVKTCQKDSEKFFAICIRGDRQINLTKVASFLQVDDCELASEEEILKHLHVEKGFIGPLYCPIPCYADETTRPMTNFICANNQKDVHCKHVNWGRDIPLPAFGDFLLAEAGDLCPQNGGAPYEIFQGVEVAHIFNLGTRYTESFSVGFQDKNGDKQLCWMGTYGIGVGRTLAACIEQLADNKGLVWPLAVAPFSITILYNGGDTEGEATALQLYQSLNTEGFEPLLDDRNERLGFKLKDSDLLGIPYKLIIGKSFQSTGLLEIESRSGEKCNVSPENLLDWCSKNLPCHTRKIPPLREQN.

The protein belongs to the class-II aminoacyl-tRNA synthetase family. ProS type 1 subfamily. Homodimer.

The protein localises to the cytoplasm. The enzyme catalyses tRNA(Pro) + L-proline + ATP = L-prolyl-tRNA(Pro) + AMP + diphosphate. Catalyzes the attachment of proline to tRNA(Pro) in a two-step reaction: proline is first activated by ATP to form Pro-AMP and then transferred to the acceptor end of tRNA(Pro). As ProRS can inadvertently accommodate and process non-cognate amino acids such as alanine and cysteine, to avoid such errors it has two additional distinct editing activities against alanine. One activity is designated as 'pretransfer' editing and involves the tRNA(Pro)-independent hydrolysis of activated Ala-AMP. The other activity is designated 'posttransfer' editing and involves deacylation of mischarged Ala-tRNA(Pro). The misacylated Cys-tRNA(Pro) is not edited by ProRS. This Chlamydia trachomatis serovar D (strain ATCC VR-885 / DSM 19411 / UW-3/Cx) protein is Proline--tRNA ligase.